The sequence spans 234 residues: Sugar fermentation stimulation protein A (234 aa).

A DNA-binding region (H-T-H motif) is located at residues 201-220; the sequence is LLSEAQQRGVEILAYKAELS.

The protein belongs to the SfsA family.

In terms of biological role, binds to DNA non-specifically. Could be a regulatory factor involved in maltose metabolism. This is Sugar fermentation stimulation protein A from Escherichia coli O127:H6 (strain E2348/69 / EPEC).